The primary structure comprises 90 residues: DNA-directed RNA polymerase subunit omega (90 aa).

Belongs to the RNA polymerase subunit omega family. The RNAP catalytic core consists of 2 alpha, 1 beta, 1 beta' and 1 omega subunit. When a sigma factor is associated with the core the holoenzyme is formed, which can initiate transcription.

It catalyses the reaction RNA(n) + a ribonucleoside 5'-triphosphate = RNA(n+1) + diphosphate. Promotes RNA polymerase assembly. Latches the N- and C-terminal regions of the beta' subunit thereby facilitating its interaction with the beta and alpha subunits. Required for kasugamycin production and aerial mycelium formation in S.kasugaensis and responsible for pleiotropy. In Streptomyces kasugaensis, this protein is DNA-directed RNA polymerase subunit omega (rpoZ).